A 173-amino-acid chain; its full sequence is Nascent polypeptide-associated complex subunit alpha (173 aa).

The 65-residue stretch at Val-21 to Ala-85 folds into the NAC-A/B domain. The segment at Asn-89 to Ala-117 is disordered. At Ser-122 the chain carries Phosphoserine. Positions Val-134–Leu-171 constitute a UBA domain.

Belongs to the NAC-alpha family. Part of the nascent polypeptide-associated complex (NAC), consisting of ucp15 and btf3. NAC associates with ribosomes via btf3.

It is found in the cytoplasm. It localises to the nucleus. Its function is as follows. Component of the nascent polypeptide-associated complex (NAC), a dynamic component of the ribosomal exit tunnel, protecting the emerging polypeptides from interaction with other cytoplasmic proteins to ensure appropriate nascent protein targeting. The NAC complex also promotes mitochondrial protein import by enhancing productive ribosome interactions with the outer mitochondrial membrane and blocks the inappropriate interaction of ribosomes translating non-secretory nascent polypeptides with translocation sites in the membrane of the endoplasmic reticulum. Ucp15 may also be involved in transcription regulation. This Schizosaccharomyces pombe (strain 972 / ATCC 24843) (Fission yeast) protein is Nascent polypeptide-associated complex subunit alpha (egd2).